Consider the following 630-residue polypeptide: 1-deoxy-D-xylulose-5-phosphate synthase (630 aa).

Thiamine diphosphate-binding positions include His87 and 128 to 130; that span reads GHS. Mg(2+) is bound at residue Asp159. Residues 160 to 161, Asn188, Phe295, and Glu377 each bind thiamine diphosphate; that span reads GA. Asn188 serves as a coordination point for Mg(2+).

Belongs to the transketolase family. DXPS subfamily. As to quaternary structure, homodimer. Requires Mg(2+) as cofactor. Thiamine diphosphate is required as a cofactor.

It carries out the reaction D-glyceraldehyde 3-phosphate + pyruvate + H(+) = 1-deoxy-D-xylulose 5-phosphate + CO2. It participates in metabolic intermediate biosynthesis; 1-deoxy-D-xylulose 5-phosphate biosynthesis; 1-deoxy-D-xylulose 5-phosphate from D-glyceraldehyde 3-phosphate and pyruvate: step 1/1. Catalyzes the acyloin condensation reaction between C atoms 2 and 3 of pyruvate and glyceraldehyde 3-phosphate to yield 1-deoxy-D-xylulose-5-phosphate (DXP). The protein is 1-deoxy-D-xylulose-5-phosphate synthase of Pseudomonas syringae pv. syringae (strain B728a).